A 552-amino-acid polypeptide reads, in one-letter code: CTP synthase (552 aa).

The amidoligase domain stretch occupies residues 1–267 (MSKFVFVTGG…AHQTLELLRM (267 aa)). Residue Ser-13 coordinates CTP. Position 13 (Ser-13) interacts with UTP. ATP is bound by residues 14–19 (SIGKGI) and Asp-71. Mg(2+)-binding residues include Asp-71 and Glu-141. CTP contacts are provided by residues 148–150 (DIE), 188–193 (KTKPTQ), and Lys-224. Residues 188–193 (KTKPTQ) and Lys-224 contribute to the UTP site. The 243-residue stretch at 292–534 (TVALVGKYVQ…INAVLKRRNA (243 aa)) folds into the Glutamine amidotransferase type-1 domain. L-glutamine is bound at residue Gly-354. The Nucleophile; for glutamine hydrolysis role is filled by Cys-381. L-glutamine-binding positions include 382–385 (LGMQ), Glu-405, and Arg-462. Active-site residues include His-507 and Glu-509.

This sequence belongs to the CTP synthase family. Homotetramer.

It carries out the reaction UTP + L-glutamine + ATP + H2O = CTP + L-glutamate + ADP + phosphate + 2 H(+). The enzyme catalyses L-glutamine + H2O = L-glutamate + NH4(+). The catalysed reaction is UTP + NH4(+) + ATP = CTP + ADP + phosphate + 2 H(+). The protein operates within pyrimidine metabolism; CTP biosynthesis via de novo pathway; CTP from UDP: step 2/2. Its activity is regulated as follows. Allosterically activated by GTP, when glutamine is the substrate; GTP has no effect on the reaction when ammonia is the substrate. The allosteric effector GTP functions by stabilizing the protein conformation that binds the tetrahedral intermediate(s) formed during glutamine hydrolysis. Inhibited by the product CTP, via allosteric rather than competitive inhibition. Its function is as follows. Catalyzes the ATP-dependent amination of UTP to CTP with either L-glutamine or ammonia as the source of nitrogen. Regulates intracellular CTP levels through interactions with the four ribonucleotide triphosphates. This Synechocystis sp. (strain ATCC 27184 / PCC 6803 / Kazusa) protein is CTP synthase.